The following is a 476-amino-acid chain: uncharacterized protein (476 aa).

Residues 274 to 283 (GKGVKIETET) are compositionally biased toward basic and acidic residues. Residues 274 to 294 (GKGVKIETETRSSSSSDGETL) are disordered.

This is an uncharacterized protein from Citrus psorosis virus (isolate Spain/P-121) (CPsV).